The following is a 230-amino-acid chain: Protein GrpE (230 aa).

Disordered stretches follow at residues 1–28 (MADEKNKPENPDLDQRDINNPRDREALK) and 209–230 (GVSKGGPKVSAENGASTSEDNA). Residues 221 to 230 (NGASTSEDNA) are compositionally biased toward polar residues.

This sequence belongs to the GrpE family. In terms of assembly, homodimer.

It is found in the cytoplasm. Its function is as follows. Participates actively in the response to hyperosmotic and heat shock by preventing the aggregation of stress-denatured proteins, in association with DnaK and GrpE. It is the nucleotide exchange factor for DnaK and may function as a thermosensor. Unfolded proteins bind initially to DnaJ; upon interaction with the DnaJ-bound protein, DnaK hydrolyzes its bound ATP, resulting in the formation of a stable complex. GrpE releases ADP from DnaK; ATP binding to DnaK triggers the release of the substrate protein, thus completing the reaction cycle. Several rounds of ATP-dependent interactions between DnaJ, DnaK and GrpE are required for fully efficient folding. This is Protein GrpE from Brucella ovis (strain ATCC 25840 / 63/290 / NCTC 10512).